Here is a 307-residue protein sequence, read N- to C-terminus: tRNA dimethylallyltransferase (307 aa).

8–15 (GPTGSGKS) serves as a coordination point for ATP. 10-15 (TGSGKS) contacts substrate. Positions 33 to 36 (DSLQ) are interaction with substrate tRNA.

Belongs to the IPP transferase family. In terms of assembly, monomer. Mg(2+) is required as a cofactor.

The enzyme catalyses adenosine(37) in tRNA + dimethylallyl diphosphate = N(6)-dimethylallyladenosine(37) in tRNA + diphosphate. Its function is as follows. Catalyzes the transfer of a dimethylallyl group onto the adenine at position 37 in tRNAs that read codons beginning with uridine, leading to the formation of N6-(dimethylallyl)adenosine (i(6)A). The chain is tRNA dimethylallyltransferase from Solibacter usitatus (strain Ellin6076).